Here is a 465-residue protein sequence, read N- to C-terminus: Monocarboxylate transporter 4 (465 aa).

Over 2–17 the chain is Cytoplasmic; sequence GGAVVDEGPTGVKAPD. Residues 18-38 traverse the membrane as a helical segment; it reads GGWGWAVLFGCFVITGFSYAF. The Extracellular segment spans residues 39-61; it reads PKAVSVFFKELIQEFGIGYSDTA. Residues 62–82 form a helical membrane-spanning segment; the sequence is WISSILLAMLYGTGPLCSVCV. Over 83 to 84 the chain is Cytoplasmic; it reads NR. A helical membrane pass occupies residues 85-105; it reads FGCRPVMLVGGLFASLGMVAA. The Extracellular portion of the chain corresponds to 106–109; it reads SFCR. The helical transmembrane segment at 110-130 threads the bilayer; the sequence is SIIQVYLTTGVITGLGLALNF. At 131 to 149 the chain is on the cytoplasmic side; sequence QPSLIMLNRYFSKRRPMAN. The chain crosses the membrane as a helical span at residues 150–170; it reads GLAAAGSPVFLCALSPLGQLL. Residues 171 to 179 lie on the Extracellular side of the membrane; that stretch reads QDRYGWRGG. The helical transmembrane segment at 180-200 threads the bilayer; it reads FLILGGLLLNCCVCAALMRPL. Topologically, residues 201 to 227 are cytoplasmic; the sequence is VVTAQPGSGPPRPSRRLLDLSVFRDRG. The chain crosses the membrane as a helical span at residues 228–248; the sequence is FVLYAVAASVMVLGLFVPPVF. At 249–264 the chain is on the extracellular side; the sequence is VVSYAKDLGVPDTKAA. The chain crosses the membrane as a helical span at residues 265–285; the sequence is FLLTILGFIDIFARPAAGFVA. Topologically, residues 286 to 294 are cytoplasmic; the sequence is GLGKVRPYS. Residues 295–315 traverse the membrane as a helical segment; sequence VYLFSFSMFFNGLADLAGSTA. Residues 316 to 317 are Extracellular-facing; it reads GD. Residues 318–338 traverse the membrane as a helical segment; sequence YGGLVVFCIFFGISYGMVGAL. Residues 339–351 lie on the Cytoplasmic side of the membrane; sequence QFEVLMAIVGTHK. The helical transmembrane segment at 352–372 threads the bilayer; it reads FSSAIGLVLLMEAVAVLVGPP. The Extracellular segment spans residues 373-384; sequence SGGKLLDATHVY. The helical transmembrane segment at 385-405 threads the bilayer; it reads MYVFILAGAEVLTSSLILLLG. Over 406-465 the chain is Cytoplasmic; sequence NFFCIRKKPKEPQPEVAAAEEEKLHKPPADSGVDLREVEHFLKAEPEKNGEVVHTPETSV. The disordered stretch occupies residues 419–438; it reads PEVAAAEEEKLHKPPADSGV. Basolateral sorting signal regions lie at residues 423-441 and 441-465; these read AAEE…VDLR and REVE…ETSV. The span at 425-438 shows a compositional bias: basic and acidic residues; sequence EEEKLHKPPADSGV. At S436 the chain carries Phosphoserine. Position 460 is a phosphothreonine (T460). S464 bears the Phosphoserine mark.

The protein belongs to the major facilitator superfamily. Monocarboxylate porter (TC 2.A.1.13) family. In terms of assembly, interacts with BSG; interaction mediates SLC16A3 targeting to the plasma membrane. As to expression, highly expressed in skeletal muscle.

It is found in the cell membrane. The protein resides in the basolateral cell membrane. The enzyme catalyses (S)-lactate(in) + H(+)(in) = (S)-lactate(out) + H(+)(out). It carries out the reaction pyruvate(out) + H(+)(out) = pyruvate(in) + H(+)(in). Its function is as follows. Proton-dependent transporter of monocarboxylates such as L-lactate and pyruvate. Plays a predominant role in L-lactate efflux from highly glycolytic cells. The polypeptide is Monocarboxylate transporter 4 (SLC16A3) (Homo sapiens (Human)).